We begin with the raw amino-acid sequence, 386 residues long: uncharacterized protein (386 aa).

This sequence belongs to the mimivirus L17x/L18x family.

This is an uncharacterized protein from Acanthamoeba polyphaga mimivirus (APMV).